A 367-amino-acid polypeptide reads, in one-letter code: uncharacterized protein (367 aa).

This sequence to M.tuberculosis Rv0502.

This is an uncharacterized protein from Mycobacterium leprae (strain TN).